The chain runs to 545 residues: Probable protein kinase UbiB (545 aa).

The 379-residue stretch at 123-501 (DFDIVPLASA…RVRQHQSHYL (379 aa)) folds into the Protein kinase domain. ATP-binding positions include 129 to 137 (LASASIAQV) and Lys-152. Catalysis depends on Asp-287, which acts as the Proton acceptor. 2 helical membrane passes run 498-518 (SHYL…VVLS) and 521-541 (EWDG…LVGW).

The protein belongs to the ABC1 family. UbiB subfamily.

The protein resides in the cell inner membrane. It functions in the pathway cofactor biosynthesis; ubiquinone biosynthesis [regulation]. Functionally, is probably a protein kinase regulator of UbiI activity which is involved in aerobic coenzyme Q (ubiquinone) biosynthesis. This is Probable protein kinase UbiB from Erwinia tasmaniensis (strain DSM 17950 / CFBP 7177 / CIP 109463 / NCPPB 4357 / Et1/99).